The following is a 47-amino-acid chain: Zinc-finger protein TK0143 (47 aa).

The segment at 18-41 (FRCPRCGMVFRSAKAYTRHVNKAH) adopts a C2H2-type zinc-finger fold. Residues cysteine 20, cysteine 23, histidine 36, and histidine 41 each coordinate Zn(2+).

Crystallized in association with 70S ribosomes. Zn(2+) is required as a cofactor.

This is Zinc-finger protein TK0143 from Thermococcus kodakarensis (strain ATCC BAA-918 / JCM 12380 / KOD1) (Pyrococcus kodakaraensis (strain KOD1)).